Here is a 292-residue protein sequence, read N- to C-terminus: Expansin-like protein 6 (292 aa).

An N-terminal signal peptide occupies residues 1-24 (MIKIIYLIVLLVLLFKNNHIIIKA). The Extracellular segment spans residues 25–267 (DDCPFPQIPI…QITSNSNNIL (243 aa)). In terms of domain architecture, Expansin-like EG45 spans 47-150 (HASCGFEKLT…IKVPCPTYGN (104 aa)). Disulfide bonds link Cys50–Cys80 and Cys83–Cys145. Asn92 carries N-linked (GlcNAc...) asparagine glycosylation. The chain crosses the membrane as a helical span at residues 268–288 (PPSLYIIFLISILFLIINNIF). Topologically, residues 289-292 (SNKY) are cytoplasmic.

It belongs to the expansin family. Expansin A subfamily.

The protein resides in the membrane. May serve to lubricate the movement of the cellulose microfibrils during cell growth and wall extension and/or may serve to maintain the fluid state of the slug cell wall. In Dictyostelium discoideum (Social amoeba), this protein is Expansin-like protein 6 (expl6).